We begin with the raw amino-acid sequence, 475 residues long: Ribulose bisphosphate carboxylase large chain (475 aa).

The propeptide occupies 1 to 2; sequence MA. Residue P3 is modified to N-acetylproline. N6,N6,N6-trimethyllysine is present on K14. Substrate-binding residues include N123 and T173. The active-site Proton acceptor is the K175. K177 contributes to the substrate binding site. Mg(2+)-binding residues include K201, D203, and E204. At K201 the chain carries N6-carboxylysine. H294 (proton acceptor) is an active-site residue. Substrate contacts are provided by R295, H327, and S379.

It belongs to the RuBisCO large chain family. Type I subfamily. As to quaternary structure, heterohexadecamer of 8 large chains and 8 small chains; disulfide-linked. The disulfide link is formed within the large subunit homodimers. Mg(2+) serves as cofactor. In terms of processing, the disulfide bond which can form in the large chain dimeric partners within the hexadecamer appears to be associated with oxidative stress and protein turnover.

It is found in the plastid. It localises to the chloroplast. The enzyme catalyses 2 (2R)-3-phosphoglycerate + 2 H(+) = D-ribulose 1,5-bisphosphate + CO2 + H2O. It catalyses the reaction D-ribulose 1,5-bisphosphate + O2 = 2-phosphoglycolate + (2R)-3-phosphoglycerate + 2 H(+). Its function is as follows. RuBisCO catalyzes two reactions: the carboxylation of D-ribulose 1,5-bisphosphate, the primary event in carbon dioxide fixation, as well as the oxidative fragmentation of the pentose substrate in the photorespiration process. Both reactions occur simultaneously and in competition at the same active site. This chain is Ribulose bisphosphate carboxylase large chain, found in Tupiella akineta (Green alga).